Here is a 445-residue protein sequence, read N- to C-terminus: GTPase Obg (445 aa).

The Obg domain occupies 7-164; the sequence is PEFVDCVTVE…RKLRLEVKSI (158 aa). The region spanning 165–342 is the OBG-type G domain; sequence ADVALVGFPS…FTLRLGEICQ (178 aa). Residues 171–178, 196–200, 217–220, 291–294, and 323–325 contribute to the GTP site; these read GFPSVGKS, FTTLH, DVPG, NKID, and SAV. Serine 178 and threonine 198 together coordinate Mg(2+). Positions 357–434 constitute an OCT domain; sequence IPAKNTPEFS…IGGVIFTWDP (78 aa).

This sequence belongs to the TRAFAC class OBG-HflX-like GTPase superfamily. OBG GTPase family. In terms of assembly, monomer. The cofactor is Mg(2+).

The protein resides in the cytoplasm. Its function is as follows. An essential GTPase which binds GTP, GDP and possibly (p)ppGpp with moderate affinity, with high nucleotide exchange rates and a fairly low GTP hydrolysis rate. Plays a role in control of the cell cycle, stress response, ribosome biogenesis and in those bacteria that undergo differentiation, in morphogenesis control. The chain is GTPase Obg from Tropheryma whipplei (strain Twist) (Whipple's bacillus).